The following is a 262-amino-acid chain: MGRISDKFTELKEKREKALVSYLMVGYPDYETSLKAFKEVLKNGTDILEIGFPFSDPVADGPTIQVAHEVALKNGIRFEDVLELSETLRKEFPDIPFLLMTYYNPIFRIGLEKFCRLSREKGIDGFIVPDLPPEEAEELKAVMKKYVLSFVPLGAPTSTRKRIKLICEAADEMTYFVSVTGTTGAREKLPYERIKKKVEEYRELCDKPVVVGFGVSKKEHAREIGSFADGVVVGSALVKLAGQKKIEDLGNLVKELKEGLRE.

Catalysis depends on proton acceptor residues glutamate 49 and aspartate 60.

Belongs to the TrpA family. In terms of assembly, tetramer of two alpha and two beta chains.

It carries out the reaction (1S,2R)-1-C-(indol-3-yl)glycerol 3-phosphate + L-serine = D-glyceraldehyde 3-phosphate + L-tryptophan + H2O. It participates in amino-acid biosynthesis; L-tryptophan biosynthesis; L-tryptophan from chorismate: step 5/5. Functionally, the alpha subunit is responsible for the aldol cleavage of indoleglycerol phosphate to indole and glyceraldehyde 3-phosphate. This is Tryptophan synthase alpha chain from Aquifex aeolicus (strain VF5).